We begin with the raw amino-acid sequence, 203 residues long: EDQQNLSQRYIELVVVADHRVFMKYNSDLNIIRKRVHELVNTINGFYRSLNIDVSLTDLEIWSDQDFITVDSSAKNTLNSFGEWREADLLRRKSHDHAQLLTAINFEGKIIGRAYTSSMCNPRKSVGIXKDHSPINLLVGVTMAHELGHNLGMNHDGEKCLRGASLCIMRPGLTPGRSYEFSDDSMGYYQSFLKQYNPQIXNK.

Residue E1 is modified to Pyrrolidone carboxylic acid (Glu). An N-linked (GlcNAc...) asparagine glycan is attached at N5. Positions 9-203 (RYIELVVVAD…KQYNPQIXNK (195 aa)) constitute a Peptidase M12B domain. Residues E12 and D96 each contribute to the Ca(2+) site. A Zn(2+)-binding site is contributed by H145. E146 is an active-site residue. Zn(2+) is bound by residues H149 and H155. The cysteines at positions 160 and 167 are disulfide-linked. A Ca(2+)-binding site is contributed by N202.

This sequence belongs to the venom metalloproteinase (M12B) family. P-I subfamily. Monomer. It depends on Zn(2+) as a cofactor. Post-translationally, the N-terminus is blocked. Expressed by the venom gland.

It is found in the secreted. The enzyme catalyses Cleavage of 5-His-|-Leu-6, 9-Ser-|-His-10, 10-His-|-Leu-11, 14-Ala-|-Leu-15 and 16-Tyr-|-Leu-17 in insulin B chain.. Its activity is regulated as follows. Inhibited by EDTA and alpha2-macroglobulin. Functionally, snake venom zinc metalloprotease that has Aalpha, Bbeta fibrin(ogen)olytic activities. It cleaves the Aalpha chain of fibrinogen first followed by the Bbeta chain and shows no effect on the gamma chain. Does not induce or inhibit platelet aggregation, and is unable to activate plasminogen. Exhibits low lethality when tested on mice. Intravenous administration results in thrombolysis within one hour followed by recanalization. Fibrinogenolytic activity results in a 60% decrease in the rat's plasma fibrinogen level. Histological examination of kidney, liver, heart and lung tissue shows no necrosis nor hemorrhage. The polypeptide is Snake venom metalloproteinase atroxase (Crotalus atrox (Western diamondback rattlesnake)).